Consider the following 480-residue polypeptide: Probable efflux pump outer membrane protein SepC (480 aa).

The N-terminal stretch at 1 to 16 (MKTHYLSIALSVALSG) is a signal peptide. Residue Cys17 is the site of N-palmitoyl cysteine attachment. Residue Cys17 is the site of S-diacylglycerol cysteine attachment.

It belongs to the outer membrane factor (OMF) (TC 1.B.17) family.

The protein resides in the cell outer membrane. Functionally, probable outer membrane component of the SepABC efflux pump with unknown specificity. This chain is Probable efflux pump outer membrane protein SepC (sepC), found in Pseudomonas putida (strain ATCC 700007 / DSM 6899 / JCM 31910 / BCRC 17059 / LMG 24140 / F1).